We begin with the raw amino-acid sequence, 110 residues long: Protein RALF-like 19 (110 aa).

Residues 1–23 (MGIKILLILGLLTLAVVAESANA) form the signal peptide. Residues 24–58 (TWTLTKSCVNGQGCIGEDGELDYLMDSETNRRQLA) constitute a propeptide, removed in mature form. 2 cysteine pairs are disulfide-bonded: Cys76/Cys86 and Cys99/Cys105.

This sequence belongs to the plant rapid alkalinization factor (RALF) family. Post-translationally, proteolytically cleaved, probably by S1P, a subtilisin-like serine protease (subtilase).

The protein resides in the secreted. In terms of biological role, cell signaling peptide that may regulate plant stress, growth, and development. Mediates a rapid alkalinization of extracellular space by mediating a transient increase in the cytoplasmic Ca(2+) concentration leading to a calcium-dependent signaling events through a cell surface receptor and a concomitant activation of some intracellular mitogen-activated protein kinases. The sequence is that of Protein RALF-like 19 (RALFL19) from Arabidopsis thaliana (Mouse-ear cress).